A 327-amino-acid chain; its full sequence is Phosphate acyltransferase (327 aa).

This sequence belongs to the PlsX family. In terms of assembly, homodimer. Probably interacts with PlsY.

Its subcellular location is the cytoplasm. The catalysed reaction is a fatty acyl-[ACP] + phosphate = an acyl phosphate + holo-[ACP]. It participates in lipid metabolism; phospholipid metabolism. Catalyzes the reversible formation of acyl-phosphate (acyl-PO(4)) from acyl-[acyl-carrier-protein] (acyl-ACP). This enzyme utilizes acyl-ACP as fatty acyl donor, but not acyl-CoA. This Thermosipho africanus (strain TCF52B) protein is Phosphate acyltransferase.